Reading from the N-terminus, the 337-residue chain is Glutaminase-asparaginase (337 aa).

An Asparaginase/glutaminase domain is found at 10–337; that stretch reads ANVVILATGG…KELQRIFWEY (328 aa). Catalysis depends on Thr20, which acts as the Acyl-ester intermediate. Substrate-binding positions include Ser67 and 100–101; that span reads TD.

The protein belongs to the asparaginase 1 family. Homotetramer.

The protein localises to the periplasm. It catalyses the reaction L-glutamine + H2O = L-glutamate + NH4(+). It carries out the reaction L-asparagine + H2O = L-aspartate + NH4(+). The protein is Glutaminase-asparaginase (ansB) of Pseudomonas sp. (strain ATCC 29598 / 7A).